The following is a 291-amino-acid chain: MAEVTQLKRYDARPINWGKWFLIGIGMLVSAFILLVPMIYIFVQAFSKGLMPVLQNLADPDMLHAIWLTVMIALIAVPVNLVFGILLAWLVTRFNFPGRQLLLTLLDIPFAVSPVVAGLVYLLFYGSNGPLGGWLDEHNLQIMFSWPGMVLVTIFVTCPFVVRELVPVMLSQGSQEDEAAILLGASGWQMFRRVTLPNIRWALLYGVVLTNARAIGEFGAVSVVSGSIRGETLSLPLQIELLEQDYNTVGSFTAAALLTLMAIITLFLKSMLQWRLENQEKRAQQEEHHEH.

Residues Met1–Leu22 are Cytoplasmic-facing. The chain crosses the membrane as a helical span at residues Ile23 to Val43. The Periplasmic segment spans residues Gln44–Thr69. One can recognise an ABC transmembrane type-1 domain in the interval Ile66 to Ser270. Residues Val70 to Leu90 traverse the membrane as a helical segment. At Val91 to Thr104 the chain is on the cytoplasmic side. The helical transmembrane segment at Leu105–Tyr125 threads the bilayer. At Gly126–Gln141 the chain is on the periplasmic side. The chain crosses the membrane as a helical span at residues Ile142 to Val162. At Arg163–Arg200 the chain is on the cytoplasmic side. A helical membrane pass occupies residues Trp201–Val221. Residues Ser222–Asn247 are Periplasmic-facing. A helical transmembrane segment spans residues Thr248–Leu268. Over Lys269–His291 the chain is Cytoplasmic.

The protein belongs to the binding-protein-dependent transport system permease family. CysTW subfamily. In terms of assembly, the complex is composed of two ATP-binding proteins (CysA), two transmembrane proteins (CysT and CysW) and a solute-binding protein (CysP).

Its subcellular location is the cell inner membrane. In terms of biological role, part of the ABC transporter complex CysAWTP (TC 3.A.1.6.1) involved in sulfate/thiosulfate import. Probably responsible for the translocation of the substrate across the membrane. The polypeptide is Sulfate transport system permease protein CysW (cysW) (Escherichia coli O6:H1 (strain CFT073 / ATCC 700928 / UPEC)).